A 154-amino-acid polypeptide reads, in one-letter code: UPF0225 protein Spro_2712 (154 aa).

It belongs to the UPF0225 family.

This Serratia proteamaculans (strain 568) protein is UPF0225 protein Spro_2712.